Here is a 347-residue protein sequence, read N- to C-terminus: Dual-specificity RNA methyltransferase RlmN (347 aa).

Glutamate 93 acts as the Proton acceptor in catalysis. The Radical SAM core domain maps to 99-327 (DEGRNTLCIS…VITRDSRGSD (229 aa)). A disulfide bond links cysteine 106 and cysteine 332. Positions 113, 117, and 120 each coordinate [4Fe-4S] cluster. Residues 158-159 (GE), serine 190, 213-215 (SLN), and asparagine 289 contribute to the S-adenosyl-L-methionine site. The active-site S-methylcysteine intermediate is cysteine 332.

The protein belongs to the radical SAM superfamily. RlmN family. [4Fe-4S] cluster serves as cofactor.

It localises to the cytoplasm. The enzyme catalyses adenosine(2503) in 23S rRNA + 2 reduced [2Fe-2S]-[ferredoxin] + 2 S-adenosyl-L-methionine = 2-methyladenosine(2503) in 23S rRNA + 5'-deoxyadenosine + L-methionine + 2 oxidized [2Fe-2S]-[ferredoxin] + S-adenosyl-L-homocysteine. It carries out the reaction adenosine(37) in tRNA + 2 reduced [2Fe-2S]-[ferredoxin] + 2 S-adenosyl-L-methionine = 2-methyladenosine(37) in tRNA + 5'-deoxyadenosine + L-methionine + 2 oxidized [2Fe-2S]-[ferredoxin] + S-adenosyl-L-homocysteine. In terms of biological role, specifically methylates position 2 of adenine 2503 in 23S rRNA and position 2 of adenine 37 in tRNAs. m2A2503 modification seems to play a crucial role in the proofreading step occurring at the peptidyl transferase center and thus would serve to optimize ribosomal fidelity. The chain is Dual-specificity RNA methyltransferase RlmN from Pelobacter propionicus (strain DSM 2379 / NBRC 103807 / OttBd1).